Consider the following 92-residue polypeptide: MATTYEEFAAKLDRLDAEFAKKMEEQNKRFFADKPDEATLSPEMKEHYEKFEKMIQEHTDKFNKKMREHSEHFKAKFAELLEQQKNAQFPGK.

It belongs to the KMP-11 family. As to quaternary structure, monomer.

It localises to the cytoplasm. It is found in the cytoskeleton. Functionally, may be involved in the regulation of the cytoskeleton through interaction with the subpellicular microtubules. May be involved in parasite mobility and attachment to the surface of the host cell. Behaves as a strong immunogen during infection. This is Kinetoplastid membrane protein 11 (KMP-11/1) from Trypanosoma brucei brucei.